The primary structure comprises 62 residues: Protein translocase subunit SecE (62 aa).

The chain crosses the membrane as a helical span at residues 40-60 (LLVLAVVGVLAYIIQLALTLI).

It belongs to the SecE/SEC61-gamma family. Component of the Sec protein translocase complex. Heterotrimer consisting of SecY (alpha), SecG (beta) and SecE (gamma) subunits. The heterotrimers can form oligomers, although 1 heterotrimer is thought to be able to translocate proteins. Interacts with the ribosome. May interact with SecDF, and other proteins may be involved.

It is found in the cell membrane. Essential subunit of the Sec protein translocation channel SecYEG. Clamps together the 2 halves of SecY. May contact the channel plug during translocation. The protein is Protein translocase subunit SecE of Saccharolobus solfataricus (strain ATCC 35092 / DSM 1617 / JCM 11322 / P2) (Sulfolobus solfataricus).